The following is a 78-amino-acid chain: Defensin-like protein 281 (78 aa).

Residues M1–G23 form the signal peptide. Disulfide bonds link C37–C60, C46–C72, and C50–C74.

It belongs to the DEFL family.

The protein localises to the secreted. In Arabidopsis thaliana (Mouse-ear cress), this protein is Defensin-like protein 281.